A 401-amino-acid chain; its full sequence is Nicotinate phosphoribosyltransferase (401 aa).

H221 carries the phosphohistidine; by autocatalysis modification.

This sequence belongs to the NAPRTase family. In terms of processing, transiently phosphorylated on a His residue during the reaction cycle. Phosphorylation strongly increases the affinity for substrates and increases the rate of nicotinate D-ribonucleotide production. Dephosphorylation regenerates the low-affinity form of the enzyme, leading to product release.

The enzyme catalyses nicotinate + 5-phospho-alpha-D-ribose 1-diphosphate + ATP + H2O = nicotinate beta-D-ribonucleotide + ADP + phosphate + diphosphate. Its pathway is cofactor biosynthesis; NAD(+) biosynthesis; nicotinate D-ribonucleotide from nicotinate: step 1/1. Catalyzes the synthesis of beta-nicotinate D-ribonucleotide from nicotinate and 5-phospho-D-ribose 1-phosphate at the expense of ATP. The polypeptide is Nicotinate phosphoribosyltransferase (Pectobacterium atrosepticum (strain SCRI 1043 / ATCC BAA-672) (Erwinia carotovora subsp. atroseptica)).